A 136-amino-acid polypeptide reads, in one-letter code: D-ribose pyranase (136 aa).

The active-site Proton donor is the histidine 20. Substrate contacts are provided by residues aspartate 28, histidine 98, and 120-122 (YAN).

This sequence belongs to the RbsD / FucU family. RbsD subfamily. Homodecamer.

It localises to the cytoplasm. It carries out the reaction beta-D-ribopyranose = beta-D-ribofuranose. It functions in the pathway carbohydrate metabolism; D-ribose degradation; D-ribose 5-phosphate from beta-D-ribopyranose: step 1/2. Its function is as follows. Catalyzes the interconversion of beta-pyran and beta-furan forms of D-ribose. This Geobacillus kaustophilus (strain HTA426) protein is D-ribose pyranase.